Reading from the N-terminus, the 165-residue chain is Disulfide bond formation protein B (165 aa).

The Cytoplasmic segment spans residues 1–11 (MICSKVPVRAW). Residues 12–28 (FATLGLGCLGLVAVGMA) traverse the membrane as a helical segment. Residues 29–46 (LQTLLHLAPCPLCIFQRL) are Periplasmic-facing. Cysteines 38 and 41 form a disulfide. A helical membrane pass occupies residues 47–61 (LYIMIGFVGLLGFVL). The Cytoplasmic segment spans residues 62 to 66 (PAGRL). Residues 67 to 84 (LWSTLAAGLGVLGFGVAA) form a helical membrane-spanning segment. At 85–142 (YQTWMQAFPDLAPECGFTDPNAIERLVDWLGMEWPSMFLATGFCTSRDWELLGLSMAN) the chain is on the periplasmic side. A disulfide bridge connects residues Cys-99 and Cys-128. A helical transmembrane segment spans residues 143–161 (WSVLIFAGIVAYAVLLFVR). Over 162 to 165 (KDRA) the chain is Cytoplasmic.

The protein belongs to the DsbB family.

It is found in the cell inner membrane. Required for disulfide bond formation in some periplasmic proteins. Acts by oxidizing the DsbA protein. This is Disulfide bond formation protein B from Dechloromonas aromatica (strain RCB).